A 317-amino-acid polypeptide reads, in one-letter code: 4-hydroxy-3-methylbut-2-enyl diphosphate reductase (317 aa).

[4Fe-4S] cluster is bound at residue Cys12. Residues His41 and His74 each contribute to the (2E)-4-hydroxy-3-methylbut-2-enyl diphosphate site. 2 residues coordinate dimethylallyl diphosphate: His41 and His74. Isopentenyl diphosphate-binding residues include His41 and His74. Residue Cys96 coordinates [4Fe-4S] cluster. His124 is a binding site for (2E)-4-hydroxy-3-methylbut-2-enyl diphosphate. His124 provides a ligand contact to dimethylallyl diphosphate. His124 lines the isopentenyl diphosphate pocket. Glu126 functions as the Proton donor in the catalytic mechanism. Thr168 serves as a coordination point for (2E)-4-hydroxy-3-methylbut-2-enyl diphosphate. Residue Cys198 coordinates [4Fe-4S] cluster. Residues Ser226, Ser227, Asn228, and Ser270 each contribute to the (2E)-4-hydroxy-3-methylbut-2-enyl diphosphate site. 4 residues coordinate dimethylallyl diphosphate: Ser226, Ser227, Asn228, and Ser270. Residues Ser226, Ser227, Asn228, and Ser270 each coordinate isopentenyl diphosphate.

The protein belongs to the IspH family. Requires [4Fe-4S] cluster as cofactor.

The enzyme catalyses isopentenyl diphosphate + 2 oxidized [2Fe-2S]-[ferredoxin] + H2O = (2E)-4-hydroxy-3-methylbut-2-enyl diphosphate + 2 reduced [2Fe-2S]-[ferredoxin] + 2 H(+). It catalyses the reaction dimethylallyl diphosphate + 2 oxidized [2Fe-2S]-[ferredoxin] + H2O = (2E)-4-hydroxy-3-methylbut-2-enyl diphosphate + 2 reduced [2Fe-2S]-[ferredoxin] + 2 H(+). It participates in isoprenoid biosynthesis; dimethylallyl diphosphate biosynthesis; dimethylallyl diphosphate from (2E)-4-hydroxy-3-methylbutenyl diphosphate: step 1/1. It functions in the pathway isoprenoid biosynthesis; isopentenyl diphosphate biosynthesis via DXP pathway; isopentenyl diphosphate from 1-deoxy-D-xylulose 5-phosphate: step 6/6. Functionally, catalyzes the conversion of 1-hydroxy-2-methyl-2-(E)-butenyl 4-diphosphate (HMBPP) into a mixture of isopentenyl diphosphate (IPP) and dimethylallyl diphosphate (DMAPP). Acts in the terminal step of the DOXP/MEP pathway for isoprenoid precursor biosynthesis. This chain is 4-hydroxy-3-methylbut-2-enyl diphosphate reductase, found in Chromohalobacter salexigens (strain ATCC BAA-138 / DSM 3043 / CIP 106854 / NCIMB 13768 / 1H11).